A 29-amino-acid chain; its full sequence is Kalata-B4 (29 aa).

Residues 1–29 (GLPVCGETCVGGTCNTPGCTCSWPVCTRD) constitute a cross-link (cyclopeptide (Gly-Asp)). Cystine bridges form between cysteine 5-cysteine 19, cysteine 9-cysteine 21, and cysteine 14-cysteine 26.

Post-translationally, this is a cyclic peptide.

Probably participates in a plant defense mechanism. The protein is Kalata-B4 of Oldenlandia affinis.